Consider the following 210-residue polypeptide: Large ribosomal subunit protein uL3 (210 aa).

The disordered stretch occupies residues 121–150 (GGIKRHGFHRGPMAHGSKYHRRPGSLGAKG).

Belongs to the universal ribosomal protein uL3 family. In terms of assembly, part of the 50S ribosomal subunit. Forms a cluster with proteins L14 and L19.

One of the primary rRNA binding proteins, it binds directly near the 3'-end of the 23S rRNA, where it nucleates assembly of the 50S subunit. The chain is Large ribosomal subunit protein uL3 from Pelotomaculum thermopropionicum (strain DSM 13744 / JCM 10971 / SI).